A 1061-amino-acid chain; its full sequence is Transcription factor GTE10 (1061 aa).

Disordered regions lie at residues 32 to 56 (ERMN…NNGV) and 106 to 152 (NDHS…RLNV). Residues 109–118 (SCSDGPRRPP) show a composition bias toward basic and acidic residues. The 107-residue stretch at 156–262 (YTVASVMKEC…KYFESGWKSI (107 aa)) folds into the Bromo domain. An NET domain is found at 304 to 386 (KLRVEPAKLV…DYLREKKKSM (83 aa)). Disordered regions lie at residues 443–518 (ACRN…LNEL), 538–558 (VPDE…PDKR), 606–645 (KERL…ARQA), and 710–1033 (HLGL…GNGK). Over residues 448–476 (ESSSSSSSSSESGSSSSDSDSCSSSGSET) the composition is skewed to low complexity. Residues 477 to 506 (DSIKASKPTSREEKKQPGVGIDKKEDDSNS) show a composition bias toward basic and acidic residues. Residues 588-658 (PEKLRIEREE…MEKTVEINEG (71 aa)) adopt a coiled-coil conformation. 5 stretches are compositionally biased toward basic and acidic residues: residues 733–755 (RKVE…RVEG), 770–792 (EAHD…ERQL), 828–852 (EEVH…EDPR), 860–883 (VSEK…REEQ), and 912–929 (LSLD…REEG). Positions 852–893 (RASGNEESVSEKAQDYENQRDEKINQSEREEQLENVLEQESS) form a coiled coil. A compositionally biased stretch (polar residues) spans 940–949 (LVSQKTQDNG). 2 stretches are compositionally biased toward basic and acidic residues: residues 952–962 (EDEKSINKIEG) and 990–1002 (GEQK…KGVE).

Interacts with TIP/NAC091. In terms of tissue distribution, widely expressed in all tissues.

It localises to the nucleus. Functionally, acts as a negative regulator in plant response to changes in environmental conditions through the control of ABA-regulated gene expression. The sequence is that of Transcription factor GTE10 (GTE10) from Arabidopsis thaliana (Mouse-ear cress).